A 1175-amino-acid polypeptide reads, in one-letter code: Chromosome partition protein Smc (1175 aa).

32–39 lines the ATP pocket; the sequence is PNGCGKSN. The stretch at 170–504 forms a coiled coil; the sequence is VSKYKERRRE…ALKALQEKVK (335 aa). The 102-residue stretch at 524–625 folds into the SMC hinge domain; the sequence is LWSRIAIEPG…YTAPTLEEAL (102 aa). Coiled coils occupy residues 684–918 and 944–1022; these read DESR…FQLK and SQSI…ELLS. The disordered stretch occupies residues 807–849; the sequence is RQAQEATFSRRSLEARRGELSRTIETASQQARSLADEQQRAQD. The segment covering 817–828 has biased composition (basic and acidic residues); sequence RSLEARRGELSR. Residues 829-838 show a composition bias toward polar residues; sequence TIETASQQAR. Residues 840 to 849 are compositionally biased toward basic and acidic residues; that stretch reads LADEQQRAQD.

It belongs to the SMC family. Homodimer.

The protein resides in the cytoplasm. In terms of biological role, required for chromosome condensation and partitioning. The chain is Chromosome partition protein Smc from Delftia acidovorans (strain DSM 14801 / SPH-1).